Consider the following 715-residue polypeptide: Patatin-like phospholipase domain-containing protein ATEG_02594 (715 aa).

The helical transmembrane segment at 84–104 (WPFLAFVLGWISFLGVAYILT) threads the bilayer. The PNPLA domain maps to 274 to 465 (LCLSGGATFA…RTDIPIKALN (192 aa)). The short motif at 305 to 309 (GTSGG) is the GXSXG element. Residue Ser307 is the Nucleophile of the active site. Asp452 serves as the catalytic Proton acceptor. A disordered region spans residues 613–715 (TAPRGGGRAT…DVDSDTWKGQ (103 aa)). Residues 652–661 (RTGEYSKEAD) show a composition bias toward basic and acidic residues. Residues 665-678 (AEMSDSSGVDSATA) are compositionally biased toward polar residues.

Belongs to the PLPL family.

Its subcellular location is the membrane. Functionally, probable lipid hydrolase. The polypeptide is Patatin-like phospholipase domain-containing protein ATEG_02594 (Aspergillus terreus (strain NIH 2624 / FGSC A1156)).